The primary structure comprises 349 residues: Cell adhesion molecule CEACAM8 (349 aa).

An N-terminal signal peptide occupies residues 1–34 (MGPISAPSCRWRIPWQGLLLTASLFTFWNPPTTA). Positions 35–142 (QLTIEAVPSN…EVTGQFSVHP (108 aa)) constitute an Ig-like V-type domain. N104, N111, N115, N152, N173, N197, N224, N256, N274, N288, and N309 each carry an N-linked (GlcNAc...) asparagine glycan. Ig-like C2-type domains follow at residues 145 to 232 (PKPS…VTLN) and 237 to 319 (PDAP…ITVS). An intrachain disulfide couples C167 to C215. C259 and C299 are oxidised to a cystine. The GPI-anchor amidated aspartate moiety is linked to residue D320. The propeptide at 321 to 349 (ALVQGSSPGLSARATVSIMIGVLARVALI) is removed in mature form.

This sequence belongs to the immunoglobulin superfamily. CEA family. Monomer. Heterodimer with CEACAM6; heterodimerizes via its Ig-like V-type domain. Post-translationally, glycosylated. Expressed in leukocytes of chronic myeloid Leukemia patients and bone marrow.

The protein resides in the cell membrane. It localises to the cell surface. Functionally, cell surface glycoprotein that plays a role in cell adhesion in a calcium-independent manner. Mediates heterophilic cell adhesion with other carcinoembryonic antigen-related cell adhesion molecules, such as CEACAM6. Heterophilic interaction with CEACAM8 occurs in activated neutrophils. This Homo sapiens (Human) protein is Cell adhesion molecule CEACAM8.